We begin with the raw amino-acid sequence, 282 residues long: Nucleotide-binding protein Fnod_1159 (282 aa).

9–16 is a binding site for ATP; that stretch reads GHSGAGKS. GTP is bound at residue 57-60; sequence DIRS.

This sequence belongs to the RapZ-like family.

Functionally, displays ATPase and GTPase activities. This Fervidobacterium nodosum (strain ATCC 35602 / DSM 5306 / Rt17-B1) protein is Nucleotide-binding protein Fnod_1159.